The chain runs to 116 residues: NADPH-dependent 7-cyano-7-deazaguanine reductase (116 aa).

The active-site Thioimide intermediate is Cys31. Asp38 serves as the catalytic Proton donor. Substrate contacts are provided by residues 53-55 (IEL) and 72-73 (YE).

This sequence belongs to the GTP cyclohydrolase I family. QueF type 1 subfamily.

It localises to the cytoplasm. It catalyses the reaction 7-aminomethyl-7-carbaguanine + 2 NADP(+) = 7-cyano-7-deazaguanine + 2 NADPH + 3 H(+). Its pathway is tRNA modification; tRNA-queuosine biosynthesis. Its function is as follows. Catalyzes the NADPH-dependent reduction of 7-cyano-7-deazaguanine (preQ0) to 7-aminomethyl-7-deazaguanine (preQ1). The polypeptide is NADPH-dependent 7-cyano-7-deazaguanine reductase (Chlorobium luteolum (strain DSM 273 / BCRC 81028 / 2530) (Pelodictyon luteolum)).